The sequence spans 211 residues: HTH-type transcriptional repressor FabR (211 aa).

An HTH tetR-type domain is found at 10–70 (RTRRSLVEAA…TMVDESGLML (61 aa)). The segment at residues 33–52 (SLREVAREAGIAPTSFYRHF) is a DNA-binding region (H-T-H motif).

In terms of assembly, homodimer.

The protein localises to the cytoplasm. Functionally, represses the transcription of fabB, involved in unsaturated fatty acid (UFA) biosynthesis. By controlling UFA production, FabR directly influences the physical properties of the membrane bilayer. In Cronobacter sakazakii (strain ATCC BAA-894) (Enterobacter sakazakii), this protein is HTH-type transcriptional repressor FabR.